Here is a 257-residue protein sequence, read N- to C-terminus: MTQHFPTRQLRFFLTAPSPCPYLPERYERKVFAHLPLSDGATVNDSLTQVGFRRSQNIAYRPACEACSACVSARLPVTDYAFSRSERKVLARNEDLERHLVEAEATMEQFDLLRRYLLARHADGGMAEMTWPDYVAMVEDTAVRTHIIEYRTRPSDGGPGELVACALVDLMSDGLSLVYSFYDPTLGRRSLGSFVILDHVVQAGLAGLPYVYLGYWVRGSEKMDYKVRFSPIELLKAEGWTLMSSRDLRPKDELPGL.

The protein belongs to the R-transferase family. Bpt subfamily.

The protein resides in the cytoplasm. The enzyme catalyses N-terminal L-glutamyl-[protein] + L-leucyl-tRNA(Leu) = N-terminal L-leucyl-L-glutamyl-[protein] + tRNA(Leu) + H(+). It carries out the reaction N-terminal L-aspartyl-[protein] + L-leucyl-tRNA(Leu) = N-terminal L-leucyl-L-aspartyl-[protein] + tRNA(Leu) + H(+). Its function is as follows. Functions in the N-end rule pathway of protein degradation where it conjugates Leu from its aminoacyl-tRNA to the N-termini of proteins containing an N-terminal aspartate or glutamate. The polypeptide is Aspartate/glutamate leucyltransferase (Phenylobacterium zucineum (strain HLK1)).